The chain runs to 180 residues: Large ribosomal subunit protein uL5 (180 aa).

The protein belongs to the universal ribosomal protein uL5 family. As to quaternary structure, part of the 50S ribosomal subunit; part of the 5S rRNA/L5/L18/L25 subcomplex. Contacts the 5S rRNA and the P site tRNA. Forms a bridge to the 30S subunit in the 70S ribosome.

In terms of biological role, this is one of the proteins that bind and probably mediate the attachment of the 5S RNA into the large ribosomal subunit, where it forms part of the central protuberance. In the 70S ribosome it contacts protein S13 of the 30S subunit (bridge B1b), connecting the 2 subunits; this bridge is implicated in subunit movement. Contacts the P site tRNA; the 5S rRNA and some of its associated proteins might help stabilize positioning of ribosome-bound tRNAs. In Xanthomonas oryzae pv. oryzae (strain MAFF 311018), this protein is Large ribosomal subunit protein uL5.